Here is a 455-residue protein sequence, read N- to C-terminus: Probable glycine dehydrogenase (decarboxylating) subunit 1 (455 aa).

It belongs to the GcvP family. N-terminal subunit subfamily. As to quaternary structure, the glycine cleavage system is composed of four proteins: P, T, L and H. In this organism, the P 'protein' is a heterodimer of two subunits.

It carries out the reaction N(6)-[(R)-lipoyl]-L-lysyl-[glycine-cleavage complex H protein] + glycine + H(+) = N(6)-[(R)-S(8)-aminomethyldihydrolipoyl]-L-lysyl-[glycine-cleavage complex H protein] + CO2. The glycine cleavage system catalyzes the degradation of glycine. The P protein binds the alpha-amino group of glycine through its pyridoxal phosphate cofactor; CO(2) is released and the remaining methylamine moiety is then transferred to the lipoamide cofactor of the H protein. The sequence is that of Probable glycine dehydrogenase (decarboxylating) subunit 1 from Francisella tularensis subsp. holarctica (strain LVS).